Reading from the N-terminus, the 383-residue chain is Succinyl-diaminopimelate desuccinylase (383 aa).

Zn(2+) is bound at residue histidine 72. The active site involves aspartate 74. Position 105 (aspartate 105) interacts with Zn(2+). Catalysis depends on glutamate 139, which acts as the Proton acceptor. Residues glutamate 140, glutamate 168, and histidine 356 each contribute to the Zn(2+) site.

Belongs to the peptidase M20A family. DapE subfamily. As to quaternary structure, homodimer. The cofactor is Zn(2+). It depends on Co(2+) as a cofactor.

It carries out the reaction N-succinyl-(2S,6S)-2,6-diaminopimelate + H2O = (2S,6S)-2,6-diaminopimelate + succinate. It participates in amino-acid biosynthesis; L-lysine biosynthesis via DAP pathway; LL-2,6-diaminopimelate from (S)-tetrahydrodipicolinate (succinylase route): step 3/3. In terms of biological role, catalyzes the hydrolysis of N-succinyl-L,L-diaminopimelic acid (SDAP), forming succinate and LL-2,6-diaminopimelate (DAP), an intermediate involved in the bacterial biosynthesis of lysine and meso-diaminopimelic acid, an essential component of bacterial cell walls. The protein is Succinyl-diaminopimelate desuccinylase of Beijerinckia indica subsp. indica (strain ATCC 9039 / DSM 1715 / NCIMB 8712).